The chain runs to 176 residues: MDLPGPIHDFLLVFLGLGLILGGIGVVLLTNPIYSAFSLGLVLVCISLLYILSNSYFVAAAQLLIYVGAINVLIIFAVMFMNGSEYYKDFNLWTVGNGFTLLICTSIFGLLITTITDTSWYGIIWTTRSNQIIEHDLISNSQQIGIHLSTDFFLPFEFISIILLAALIGAITVARQ.

5 helical membrane-spanning segments follow: residues 10–30, 32–52, 61–81, 92–112, and 152–172; these read FLLV…VLLT, PIYS…LYIL, AQLL…VMFM, LWTV…GLLI, and FFLP…GAIT.

It belongs to the complex I subunit 6 family. As to quaternary structure, NDH is composed of at least 16 different subunits, 5 of which are encoded in the nucleus.

Its subcellular location is the plastid. It localises to the chloroplast thylakoid membrane. The catalysed reaction is a plastoquinone + NADH + (n+1) H(+)(in) = a plastoquinol + NAD(+) + n H(+)(out). It catalyses the reaction a plastoquinone + NADPH + (n+1) H(+)(in) = a plastoquinol + NADP(+) + n H(+)(out). In terms of biological role, NDH shuttles electrons from NAD(P)H:plastoquinone, via FMN and iron-sulfur (Fe-S) centers, to quinones in the photosynthetic chain and possibly in a chloroplast respiratory chain. The immediate electron acceptor for the enzyme in this species is believed to be plastoquinone. Couples the redox reaction to proton translocation, and thus conserves the redox energy in a proton gradient. In Morus indica (Mulberry), this protein is NAD(P)H-quinone oxidoreductase subunit 6, chloroplastic (ndhG).